Reading from the N-terminus, the 160-residue chain is Cyclic pyranopterin monophosphate synthase (160 aa).

Residues 77–79 (MCH) and 114–115 (ME) contribute to the substrate site. Residue Asp-129 is part of the active site.

This sequence belongs to the MoaC family. Homohexamer; trimer of dimers.

The catalysed reaction is (8S)-3',8-cyclo-7,8-dihydroguanosine 5'-triphosphate = cyclic pyranopterin phosphate + diphosphate. It functions in the pathway cofactor biosynthesis; molybdopterin biosynthesis. Its function is as follows. Catalyzes the conversion of (8S)-3',8-cyclo-7,8-dihydroguanosine 5'-triphosphate to cyclic pyranopterin monophosphate (cPMP). This chain is Cyclic pyranopterin monophosphate synthase, found in Listeria monocytogenes serotype 4b (strain F2365).